A 337-amino-acid chain; its full sequence is ADP-ribosylation factor GTPase-activating protein AGD12 (337 aa).

The region spanning lysine 15–threonine 137 is the Arf-GAP domain. Residues cysteine 30–cysteine 53 form a C4-type zinc finger. Residues threonine 164–phenylalanine 281 enclose the C2 domain. Ca(2+)-binding residues include aspartate 250, serine 253, and aspartate 256.

It depends on Ca(2+) as a cofactor. As to expression, expressed in roots, leaves, flowers and siliques. Low levels of expression in seeds and stems.

The protein localises to the golgi apparatus. It localises to the cell membrane. In terms of biological role, GTPase-activating protein (GAP) for ADP ribosylation factor (ARF). Binds phosphatidylinositol 3-monophosohate (PI-3-P) and anionic phospholipids. The chain is ADP-ribosylation factor GTPase-activating protein AGD12 (AGD12) from Arabidopsis thaliana (Mouse-ear cress).